The chain runs to 421 residues: UDP-N-acetylglucosamine 1-carboxyvinyltransferase (421 aa).

22–23 serves as a coordination point for phosphoenolpyruvate; the sequence is KN. Residue R93 coordinates UDP-N-acetyl-alpha-D-glucosamine. The active-site Proton donor is the C117. Position 117 is a 2-(S-cysteinyl)pyruvic acid O-phosphothioketal (C117). UDP-N-acetyl-alpha-D-glucosamine contacts are provided by residues 122-126, D308, and L330; that span reads RPVDL.

This sequence belongs to the EPSP synthase family. MurA subfamily.

It is found in the cytoplasm. It carries out the reaction phosphoenolpyruvate + UDP-N-acetyl-alpha-D-glucosamine = UDP-N-acetyl-3-O-(1-carboxyvinyl)-alpha-D-glucosamine + phosphate. It participates in cell wall biogenesis; peptidoglycan biosynthesis. In terms of biological role, cell wall formation. Adds enolpyruvyl to UDP-N-acetylglucosamine. This is UDP-N-acetylglucosamine 1-carboxyvinyltransferase from Wolinella succinogenes (strain ATCC 29543 / DSM 1740 / CCUG 13145 / JCM 31913 / LMG 7466 / NCTC 11488 / FDC 602W) (Vibrio succinogenes).